The following is a 301-amino-acid chain: Probable alpha-L-glutamate ligase 1 (301 aa).

Residues 104–287 (LQLLSRKNIG…VAEKIIQFIE (184 aa)) enclose the ATP-grasp domain. Residues lysine 141, 178–179 (EY), aspartate 187, and 211–213 (RSN) contribute to the ATP site. Mg(2+) is bound by residues aspartate 248, glutamate 260, and asparagine 262. Mn(2+) contacts are provided by aspartate 248, glutamate 260, and asparagine 262.

It belongs to the RimK family. Requires Mg(2+) as cofactor. Mn(2+) serves as cofactor.

The protein is Probable alpha-L-glutamate ligase 1 of Shewanella frigidimarina (strain NCIMB 400).